We begin with the raw amino-acid sequence, 840 residues long: Heat shock 70 kDa protein 4 (840 aa).

N6-acetyllysine is present on Lys-53. Ser-76 carries the post-translational modification Phosphoserine. A phosphotyrosine mark is found at Tyr-89 and Tyr-336. Phosphoserine is present on residues Ser-393 and Ser-415. An N6-acetyllysine modification is found at Lys-430. The tract at residues 506–575 (NEEPMETDQN…QAKKAKVKTS (70 aa)) is disordered. A compositionally biased stretch (basic and acidic residues) spans 514 to 533 (QNAKEEEKMQVDQEEPHAEE). Thr-538 bears the Phosphothreonine mark. Ser-546 and Ser-647 each carry phosphoserine. Position 660 is a phosphotyrosine (Tyr-660). N6-acetyllysine is present on Lys-679. Ser-756 bears the Phosphoserine mark. Lys-773 is subject to N6-methyllysine. Residues 782–840 (IISKPKPKVEPPKEEQKNAEQNGPVDGQGDSPGPQAAEQGTDTAVPSDSDKKLPEMDID) are disordered. 2 stretches are compositionally biased toward basic and acidic residues: residues 788-799 (PKVEPPKEEQKN) and 829-840 (DSDKKLPEMDID).

This sequence belongs to the heat shock protein 70 family. As to quaternary structure, interacts with TJP1/ZO-1.

It is found in the cytoplasm. The protein is Heat shock 70 kDa protein 4 (HSPA4) of Canis lupus familiaris (Dog).